Here is a 55-residue protein sequence, read N- to C-terminus: Large ribosomal subunit protein bL33 (55 aa).

Positions 1 to 11 (MAKGGREKIKL) are enriched in basic and acidic residues. The tract at residues 1-26 (MAKGGREKIKLESTAGTGHFYTTDKN) is disordered.

The protein belongs to the bacterial ribosomal protein bL33 family.

The protein is Large ribosomal subunit protein bL33 of Methylibium petroleiphilum (strain ATCC BAA-1232 / LMG 22953 / PM1).